Reading from the N-terminus, the 148-residue chain is NADPH-dependent 7-cyano-7-deazaguanine reductase (148 aa).

The active-site Thioimide intermediate is the C50. D57 serves as the catalytic Proton donor. Substrate is bound by residues 72-74 (VES) and 91-92 (HE).

It belongs to the GTP cyclohydrolase I family. QueF type 1 subfamily.

The protein resides in the cytoplasm. It carries out the reaction 7-aminomethyl-7-carbaguanine + 2 NADP(+) = 7-cyano-7-deazaguanine + 2 NADPH + 3 H(+). Its pathway is tRNA modification; tRNA-queuosine biosynthesis. Functionally, catalyzes the NADPH-dependent reduction of 7-cyano-7-deazaguanine (preQ0) to 7-aminomethyl-7-deazaguanine (preQ1). This Helicobacter pylori (strain P12) protein is NADPH-dependent 7-cyano-7-deazaguanine reductase.